Here is a 607-residue protein sequence, read N- to C-terminus: CUB and zona pellucida-like domain-containing protein 1 (607 aa).

A signal peptide spans 1-24; sequence MELVRRLMPLTLLILSCLAELTMA. Cys17 and Cys58 form a disulfide bridge. CUB domains lie at 25–146 and 154–265; these read EAEG…YFFS and CGGY…YTSI. Residues 25 to 568 are Lumenal-facing; sequence EAEGNASCTV…EETPNQPFNS (544 aa). N-linked (GlcNAc...) asparagine glycosylation is found at Asn29, Asn57, and Asn67. 3 disulfides stabilise this stretch: Cys85–Cys107, Cys154–Cys180, and Cys207–Cys229. Positions 276-519 constitute a ZP domain; the sequence is TCSSDRMRVI…SRCNQGCVSR (244 aa). 2 N-linked (GlcNAc...) asparagine glycosylation sites follow: Asn394 and Asn419. An intrachain disulfide couples Cys442 to Cys498. A helical transmembrane segment spans residues 569 to 589; that stretch reads VHLFSFMVLALNVVTVATITV. At 590–607 the chain is on the cytoplasmic side; it reads RHFVNQRADYKYQKLQNY.

Detected in pancreas and epithelium of ovary. Expressed at higher levels in ovarian tumors than in normal tissue.

Its subcellular location is the zymogen granule membrane. Functionally, localized to zymogen granules, where it functions in trypsinogen activation. May indirectly regulate cell motility, cell-cell and cell/extracellular matrix interactions. This Homo sapiens (Human) protein is CUB and zona pellucida-like domain-containing protein 1.